The sequence spans 265 residues: uncharacterized protein (265 aa).

An N-terminal signal peptide occupies residues 1–22; it reads MGYFKRVLLYIIVMVLSVFIIG. Cys23 is lipidated: N-palmitoyl cysteine. Cys23 is lipidated: S-diacylglycerol cysteine.

This sequence belongs to the staphylococcal tandem lipoprotein family.

It is found in the cell membrane. This is an uncharacterized protein from Staphylococcus aureus (strain MSSA476).